The following is an 848-amino-acid chain: Crooked neck-like protein 1 (848 aa).

T2 is subject to N-acetylalanine. The segment at 81 to 106 is disordered; it reads RSSRTPHSTRCRKEDAQPGHHGNGAA. 17 HAT repeats span residues 222 to 254, 256 to 288, 290 to 322, 324 to 355, 357 to 388, 390 to 425, 427 to 461, 471 to 503, 505 to 539, 549 to 585, 587 to 618, 620 to 652, 654 to 688, 690 to 721, 726 to 767, 769 to 807, and 809 to 834; these read DYKL…WEES, KEIQ…MEMK, RQVN…MEEM, GNVA…FELR, KEVD…FEEK, AYFA…FEEN, KEFE…FEKK, IIVS…LVES, AEAE…LWIN, KDPE…FEIR, KNLS…LELQ, REFD…LETI, GDID…FEIE, EETE…FELS, GSLT…EFGT, SDKE…YIFP, and DAAN…EKED. Positions 411-628 are mediates interaction with HSP90; that stretch reads MDEHLYVAFA…LREFDRCRKL (218 aa). A Phosphoserine modification is found at S503. Residues 827–848 are disordered; sequence KQQQEKEDAEHHPDEDVDESES. A compositionally biased stretch (basic and acidic residues) spans 828–840; the sequence is QQQEKEDAEHHPD.

The protein belongs to the crooked-neck family. Identified in the spliceosome C complex. Present in a spliceosome complex assembled in vitro containing CRNKL1, HPRP8BP and SNRPB2. Component of the minor spliceosome, which splices U12-type introns. Isoform 2 seems to be predominant in the spliceosome complex. Interacts with PPIL2 (via the PPIase cyclophilin-type domain); they may form a trimeric complex with HSP90. Widely expressed. Highly expressed in testis. Not detected in brain and lung.

Its subcellular location is the nucleus. It is found in the nucleus speckle. Its function is as follows. Involved in pre-mRNA splicing process. As a component of the minor spliceosome, involved in the splicing of U12-type introns in pre-mRNAs. The protein is Crooked neck-like protein 1 (CRNKL1) of Homo sapiens (Human).